We begin with the raw amino-acid sequence, 370 residues long: 3-isopropylmalate dehydrogenase 1 (370 aa).

Residues R98, R108, R136, and D227 each contribute to the substrate site. Mg(2+) contacts are provided by D227, D251, and D255. Position 289-301 (289-301) interacts with NAD(+); sequence GSAPDIAGQGIAN.

Belongs to the isocitrate and isopropylmalate dehydrogenases family. LeuB type 1 subfamily. In terms of assembly, homodimer. Mg(2+) serves as cofactor. The cofactor is Mn(2+).

The protein resides in the cytoplasm. The catalysed reaction is (2R,3S)-3-isopropylmalate + NAD(+) = 4-methyl-2-oxopentanoate + CO2 + NADH. It functions in the pathway amino-acid biosynthesis; L-leucine biosynthesis; L-leucine from 3-methyl-2-oxobutanoate: step 3/4. In terms of biological role, catalyzes the oxidation of 3-carboxy-2-hydroxy-4-methylpentanoate (3-isopropylmalate) to 3-carboxy-4-methyl-2-oxopentanoate. The product decarboxylates to 4-methyl-2 oxopentanoate. The sequence is that of 3-isopropylmalate dehydrogenase 1 from Bordetella bronchiseptica (strain ATCC BAA-588 / NCTC 13252 / RB50) (Alcaligenes bronchisepticus).